Reading from the N-terminus, the 517-residue chain is GMP synthase [glutamine-hydrolyzing] (517 aa).

A Glutamine amidotransferase type-1 domain is found at 11-202 (KIIVLDFGSQ…AFDVCEAKAN (192 aa)). The Nucleophile role is filled by Cys88. Active-site residues include His176 and Glu178. Residues 203–392 (WSMNDFIDMQ…LGMPEDLVWR (190 aa)) form the GMPS ATP-PPase domain. 230–236 (SGGVDSS) provides a ligand contact to ATP.

Homodimer.

It catalyses the reaction XMP + L-glutamine + ATP + H2O = GMP + L-glutamate + AMP + diphosphate + 2 H(+). Its pathway is purine metabolism; GMP biosynthesis; GMP from XMP (L-Gln route): step 1/1. Catalyzes the synthesis of GMP from XMP. The protein is GMP synthase [glutamine-hydrolyzing] of Pediococcus pentosaceus (strain ATCC 25745 / CCUG 21536 / LMG 10740 / 183-1w).